The chain runs to 216 residues: Adenylate kinase (216 aa).

Gly10–Thr15 contacts ATP. Residues Ser30 to Ile59 are NMP. Residues Thr31, Arg36, Lys57–Ile59, Gly85–Arg88, and Gln92 each bind AMP. The interval Gly121–Asp158 is LID. ATP-binding positions include Arg122 and Thr131–Tyr132. Residues Arg155 and Arg166 each coordinate AMP. Residue Gln196 participates in ATP binding.

The protein belongs to the adenylate kinase family. As to quaternary structure, monomer.

It localises to the cytoplasm. It carries out the reaction AMP + ATP = 2 ADP. It participates in purine metabolism; AMP biosynthesis via salvage pathway; AMP from ADP: step 1/1. Catalyzes the reversible transfer of the terminal phosphate group between ATP and AMP. Plays an important role in cellular energy homeostasis and in adenine nucleotide metabolism. The chain is Adenylate kinase from Buchnera aphidicola subsp. Cinara cedri (strain Cc).